A 149-amino-acid chain; its full sequence is MKIYTQRNNKVEFSDSGSSEYSEYQRVIDADTKENTYEIVATYNRYDEIQEAGEGTDLRSMLDKYGDDYLELLPPARLGGDDTILPKSVLELENIRLQNTEYLSLLENINSKLDKQGLGDLDNFIKNWQESQKKIENEKGKKEDEKENE.

It belongs to the microvidae B protein family.

It is found in the host cytoplasm. Functionally, participates in the assembly of the viral procapsid in the cytoplasm. Released from the procapsid upon genome packaging, possibly through affinity displacement by the protein ORF8, or by proteolysis. This is Internal scaffolding protein ORF3 from Spiroplasma virus 4 (SpV4).